A 197-amino-acid chain; its full sequence is Dephospho-CoA kinase (197 aa).

The DPCK domain occupies 2-197; that stretch reads IIGLTGGIAS…GAIKDLANLV (196 aa). 10–15 is an ATP binding site; it reads ASGKST.

This sequence belongs to the CoaE family.

The protein localises to the cytoplasm. It carries out the reaction 3'-dephospho-CoA + ATP = ADP + CoA + H(+). It participates in cofactor biosynthesis; coenzyme A biosynthesis; CoA from (R)-pantothenate: step 5/5. In terms of biological role, catalyzes the phosphorylation of the 3'-hydroxyl group of dephosphocoenzyme A to form coenzyme A. This is Dephospho-CoA kinase from Streptococcus thermophilus (strain CNRZ 1066).